The sequence spans 246 residues: Probable transcriptional regulatory protein WP1214 (246 aa).

A disordered region spans residues 1 to 22 (MAGHSQFSNIKHRKGAQDAKRS).

Belongs to the TACO1 family.

It localises to the cytoplasm. This Wolbachia pipientis subsp. Culex pipiens (strain wPip) protein is Probable transcriptional regulatory protein WP1214.